The primary structure comprises 132 residues: MSVSDPIGDMLTRIRNAVGRKKTKVSTPASKLRARVLDVLQSEGYIRGYTQSEFVNGKAEIEIELKYYEGVPVIRELTRVSKPGRRVYVSVKSIPQVANGLGISILSTPKGVMADHEAREQNVGGELLCRIF.

It belongs to the universal ribosomal protein uS8 family. In terms of assembly, part of the 30S ribosomal subunit. Contacts proteins S5 and S12.

One of the primary rRNA binding proteins, it binds directly to 16S rRNA central domain where it helps coordinate assembly of the platform of the 30S subunit. The polypeptide is Small ribosomal subunit protein uS8 (Brucella anthropi (strain ATCC 49188 / DSM 6882 / CCUG 24695 / JCM 21032 / LMG 3331 / NBRC 15819 / NCTC 12168 / Alc 37) (Ochrobactrum anthropi)).